A 423-amino-acid chain; its full sequence is O-methyltransferase aoiF (423 aa).

Asp273 is an S-adenosyl-L-methionine binding site. His324 serves as the catalytic Proton acceptor.

The protein belongs to the class I-like SAM-binding methyltransferase superfamily. Cation-independent O-methyltransferase family.

It functions in the pathway secondary metabolite biosynthesis. Its function is as follows. O-methyltransferase; part of the gene cluster that mediates the biosynthesis of a methylated derivative of known natural products orthosporin and diaporthin. Within the pathway, aoiF catalyzes the biotransformation of orthosporin to diaporthin but also of diaporthin to the final product, by performing a tandem methylation of the polyketide core. Orthosporin is produced by an oxidoreductase that has still to be identified and that catalyzes the stereospecific reduction of the carbonyl moiety of the hexaketide isocoumarin scaffold produced by the non-reducing polyketide synthase aoiG to generate the S-configured secondary alcohol at C-11. The sequence is that of O-methyltransferase aoiF from Aspergillus oryzae (strain ATCC 42149 / RIB 40) (Yellow koji mold).